Reading from the N-terminus, the 236-residue chain is Small ribosomal subunit protein eS6 (236 aa).

2 positions are modified to phosphoserine: serine 232 and serine 233.

The protein belongs to the eukaryotic ribosomal protein eS6 family. In terms of processing, phosphorylated.

The chain is Small ribosomal subunit protein eS6 (RPS6) from Kluyveromyces lactis (strain ATCC 8585 / CBS 2359 / DSM 70799 / NBRC 1267 / NRRL Y-1140 / WM37) (Yeast).